We begin with the raw amino-acid sequence, 338 residues long: Glycerol-3-phosphate dehydrogenase [NAD(P)+] (338 aa).

Positions 11, 12, 32, 33, and 109 each coordinate NADPH. Sn-glycerol 3-phosphate-binding residues include K109, G140, and S142. Position 144 (A144) interacts with NADPH. The sn-glycerol 3-phosphate site is built by K195, D248, S258, R259, and N260. The active-site Proton acceptor is K195. Residue R259 participates in NADPH binding. V283 and E285 together coordinate NADPH.

This sequence belongs to the NAD-dependent glycerol-3-phosphate dehydrogenase family.

The protein resides in the cytoplasm. The catalysed reaction is sn-glycerol 3-phosphate + NAD(+) = dihydroxyacetone phosphate + NADH + H(+). The enzyme catalyses sn-glycerol 3-phosphate + NADP(+) = dihydroxyacetone phosphate + NADPH + H(+). Its pathway is membrane lipid metabolism; glycerophospholipid metabolism. Functionally, catalyzes the reduction of the glycolytic intermediate dihydroxyacetone phosphate (DHAP) to sn-glycerol 3-phosphate (G3P), the key precursor for phospholipid synthesis. This is Glycerol-3-phosphate dehydrogenase [NAD(P)+] from Leuconostoc citreum (strain KM20).